A 288-amino-acid chain; its full sequence is Proteasome subunit beta (288 aa).

Residues 1–57 constitute a propeptide, removed in mature form; by autocatalysis; the sequence is MTAGDPMRLHPGHALSSFTEHLRALAPELLGPNRFAALDGATGSSGGTGAKDIAPHG. The Nucleophile role is filled by threonine 58.

It belongs to the peptidase T1B family. As to quaternary structure, the 20S proteasome core is composed of 14 alpha and 14 beta subunits that assemble into four stacked heptameric rings, resulting in a barrel-shaped structure. The two inner rings, each composed of seven catalytic beta subunits, are sandwiched by two outer rings, each composed of seven alpha subunits. The catalytic chamber with the active sites is on the inside of the barrel. Has a gated structure, the ends of the cylinder being occluded by the N-termini of the alpha-subunits. Is capped by the proteasome-associated ATPase, ARC.

The protein resides in the cytoplasm. It catalyses the reaction Cleavage of peptide bonds with very broad specificity.. The protein operates within protein degradation; proteasomal Pup-dependent pathway. With respect to regulation, the formation of the proteasomal ATPase ARC-20S proteasome complex, likely via the docking of the C-termini of ARC into the intersubunit pockets in the alpha-rings, may trigger opening of the gate for substrate entry. Interconversion between the open-gate and close-gate conformations leads to a dynamic regulation of the 20S proteasome proteolysis activity. Component of the proteasome core, a large protease complex with broad specificity involved in protein degradation. This is Proteasome subunit beta from Nocardia farcinica (strain IFM 10152).